Reading from the N-terminus, the 317-residue chain is Carbonic anhydrase 5B, mitochondrial (317 aa).

A mitochondrion-targeting transit peptide spans 1–33 (MVVMNSLRVILQASPGKLLWRKFQIPRFMPARP). Residues 37–296 (YTCTYKTRNR…LMNRTVRSSF (260 aa)) enclose the Alpha-carbonic anhydrase domain. Zn(2+)-binding residues include His130, His132, and His155. 235–236 (TT) serves as a coordination point for substrate.

The protein belongs to the alpha-carbonic anhydrase family. Zn(2+) is required as a cofactor. As to expression, strongest expression in heart, pancreas, kidney, placenta, lung, and skeletal muscle. Not expressed in liver.

It is found in the mitochondrion. The enzyme catalyses hydrogencarbonate + H(+) = CO2 + H2O. Its activity is regulated as follows. Inhibited by coumarins, sulfonamide derivatives such as acetazolamide (AZA), saccharin and Foscarnet (phosphonoformate trisodium salt). Its function is as follows. Mitochondrial carbonic anhydrase that catalyzes the reversible conversion of carbon dioxide to bicarbonate/HCO3. In Homo sapiens (Human), this protein is Carbonic anhydrase 5B, mitochondrial (CA5B).